The chain runs to 354 residues: Homer protein homolog 2 (354 aa).

Residues 1–110 enclose the WH1 domain; sequence MGEQPIFTTR…EKFQEVREAA (110 aa). The stretch at 92 to 120 forms a coiled coil; the sequence is SEQQLTKFAEKFQEVREAARLARDKSQEK. The segment at 114–163 is disordered; sequence RDKSQEKIETSSNHSQESGCETPSSTQASSVNGTDDEKASHASPADTHLK. Residues 123–146 show a composition bias toward polar residues; the sequence is TSSNHSQESGCETPSSTQASSVNG. A coiled-coil region spans residues 160-329; sequence THLKSENDKL…RHLKGELKSF (170 aa).

The protein belongs to the Homer family. Isoform 1 and isoform 2 encode coiled-coil structures that mediate homo- and heteromultimerization. Interacts with NFATC2; interaction is reduced by AKT activation. Interacts with NFATC1 and NFATC4. Interacts with DAGLA (via PPXXF motif); this interaction is required for the cell membrane localization of DAGLA. Constitutively expressed in the adult hippocampus.

The protein localises to the cytoplasm. Its subcellular location is the cell membrane. It is found in the postsynaptic density. It localises to the synapse. The protein resides in the cell projection. The protein localises to the stereocilium. Postsynaptic density scaffolding protein. Binds and cross-links cytoplasmic regions of GRM1, GRM5, ITPR1, DNM3, RYR1, RYR2, SHANK1 and SHANK3. By physically linking GRM1 and GRM5 with ER-associated ITPR1 receptors, it aids the coupling of surface receptors to intracellular calcium release. May also couple GRM1 to PI3 kinase through its interaction with AGAP2. Isoforms can be differently regulated and may play an important role in maintaining the plasticity at glutamatergic synapses. Required for normal hearing. Negatively regulates T cell activation by inhibiting the calcineurin-NFAT pathway. Acts by competing with calcineurin/PPP3CA for NFAT protein binding, hence preventing NFAT activation by PPP3CA. The protein is Homer protein homolog 2 of Rattus norvegicus (Rat).